The sequence spans 217 residues: 3,4-dihydroxy-2-butanone 4-phosphate synthase (217 aa).

D-ribulose 5-phosphate is bound by residues 37-38 (RE), D42, 150-154 (RGGHT), and E174. E38 is a binding site for Mg(2+). H153 is a binding site for Mg(2+).

It belongs to the DHBP synthase family. Homodimer. Requires Mg(2+) as cofactor. The cofactor is Mn(2+).

It carries out the reaction D-ribulose 5-phosphate = (2S)-2-hydroxy-3-oxobutyl phosphate + formate + H(+). Its pathway is cofactor biosynthesis; riboflavin biosynthesis; 2-hydroxy-3-oxobutyl phosphate from D-ribulose 5-phosphate: step 1/1. Its function is as follows. Catalyzes the conversion of D-ribulose 5-phosphate to formate and 3,4-dihydroxy-2-butanone 4-phosphate. The chain is 3,4-dihydroxy-2-butanone 4-phosphate synthase from Escherichia coli O127:H6 (strain E2348/69 / EPEC).